A 215-amino-acid chain; its full sequence is ATP phosphoribosyltransferase (215 aa).

Belongs to the ATP phosphoribosyltransferase family. Short subfamily. As to quaternary structure, heteromultimer composed of HisG and HisZ subunits.

The protein localises to the cytoplasm. The catalysed reaction is 1-(5-phospho-beta-D-ribosyl)-ATP + diphosphate = 5-phospho-alpha-D-ribose 1-diphosphate + ATP. Its pathway is amino-acid biosynthesis; L-histidine biosynthesis; L-histidine from 5-phospho-alpha-D-ribose 1-diphosphate: step 1/9. Functionally, catalyzes the condensation of ATP and 5-phosphoribose 1-diphosphate to form N'-(5'-phosphoribosyl)-ATP (PR-ATP). Has a crucial role in the pathway because the rate of histidine biosynthesis seems to be controlled primarily by regulation of HisG enzymatic activity. In Prochlorococcus marinus (strain MIT 9215), this protein is ATP phosphoribosyltransferase.